The following is a 294-amino-acid chain: Undecaprenyl-diphosphatase (294 aa).

The next 6 membrane-spanning stretches (helical) occupy residues 39–59 (PGAA…ILYF), 93–113 (ATLG…GFTL), 123–143 (NLWI…MVDA), 198–218 (SFLM…IKAV), 232–252 (PTLV…IGFL), and 268–288 (IGLA…AIDP).

The protein belongs to the UppP family.

It is found in the cell membrane. The enzyme catalyses di-trans,octa-cis-undecaprenyl diphosphate + H2O = di-trans,octa-cis-undecaprenyl phosphate + phosphate + H(+). Functionally, catalyzes the dephosphorylation of undecaprenyl diphosphate (UPP). Confers resistance to bacitracin. This is Undecaprenyl-diphosphatase from Bifidobacterium longum (strain DJO10A).